Here is a 192-residue protein sequence, read N- to C-terminus: Amelogenin, Y isoform (192 aa).

The first 16 residues, 1–16 (MGTWILFACLLGAAYS), serve as a signal peptide directing secretion. The interval 73–192 (QSPQNHALQP…TDKTKREEVD (120 aa)) is disordered. A compositionally biased stretch (low complexity) spans 87 to 105 (PMVPAQQPVVPQQPMMPVP). The span at 108–117 (HSMTPIQHHQ) shows a compositional bias: polar residues. The segment covering 132–173 (PIQPQPHQPLQPQPPVHPIQRLPPQPPLPPIFPMQPLPPVLP) has biased composition (pro residues).

Belongs to the amelogenin family.

The protein localises to the secreted. It localises to the extracellular space. Its subcellular location is the extracellular matrix. Functionally, plays a role in the biomineralization of teeth. Seems to regulate the formation of crystallites during the secretory stage of tooth enamel development. Thought to play a major role in the structural organization and mineralization of developing enamel. The chain is Amelogenin, Y isoform (AMELY) from Bos taurus (Bovine).